The primary structure comprises 145 residues: Large ribosomal subunit protein mL43 (145 aa).

This sequence belongs to the mitochondrion-specific ribosomal protein mL43 family. Component of the mitochondrial large ribosomal subunit (mt-LSU). Mature yeast 74S mitochondrial ribosomes consist of a small (37S) and a large (54S) subunit. The 37S small subunit contains a 15S ribosomal RNA (15S mt-rRNA) and at least 32 different proteins. The 54S large subunit contains a 21S rRNA (21S mt-rRNA) and at least 45 different proteins.

The protein localises to the mitochondrion. Component of the mitochondrial ribosome (mitoribosome), a dedicated translation machinery responsible for the synthesis of mitochondrial genome-encoded proteins, including at least some of the essential transmembrane subunits of the mitochondrial respiratory chain. The mitoribosomes are attached to the mitochondrial inner membrane and translation products are cotranslationally integrated into the membrane. Also has an extraribosomal function, being essential for mitochondrial genome integrity. May interact with MHR1 to take part in the mtDNA repair mechanism. The polypeptide is Large ribosomal subunit protein mL43 (mrpl51) (Schizosaccharomyces pombe (strain 972 / ATCC 24843) (Fission yeast)).